We begin with the raw amino-acid sequence, 76 residues long: uncharacterized protein (76 aa).

This is an uncharacterized protein from Dictyostelium discoideum (Social amoeba).